Here is a 599-residue protein sequence, read N- to C-terminus: Aspartate--tRNA ligase (599 aa).

Glu180 contributes to the L-aspartate binding site. Positions 204–207 (QIFK) are aspartate. Arg226 provides a ligand contact to L-aspartate. ATP contacts are provided by residues 226–228 (RDE) and Gln235. Residue His454 coordinates L-aspartate. Residue Glu488 participates in ATP binding. Arg495 is a binding site for L-aspartate. 540–543 (GLDR) provides a ligand contact to ATP.

It belongs to the class-II aminoacyl-tRNA synthetase family. Type 1 subfamily. In terms of assembly, homodimer.

The protein localises to the cytoplasm. The catalysed reaction is tRNA(Asp) + L-aspartate + ATP = L-aspartyl-tRNA(Asp) + AMP + diphosphate. Functionally, catalyzes the attachment of L-aspartate to tRNA(Asp) in a two-step reaction: L-aspartate is first activated by ATP to form Asp-AMP and then transferred to the acceptor end of tRNA(Asp). The chain is Aspartate--tRNA ligase from Clostridium botulinum (strain Alaska E43 / Type E3).